The sequence spans 321 residues: Fe-S cluster assembly protein DRE2 (321 aa).

Positions 1–131 (MERMLLLSPP…KPDFGPENIV (131 aa)) are N-terminal SAM-like domain. Residues 132–213 (PLKLGKRKPV…EETLLDGEDM (82 aa)) form a linker region. [2Fe-2S] cluster is bound by residues C223, C234, C237, and C239. The segment at 223–239 (CRPKAGKRRRACKDCTC) is fe-S binding site A. 4 residues coordinate [4Fe-4S] cluster: C284, C287, C295, and C298. 2 short sequence motifs (cx2C motif) span residues 284–287 (CGNC) and 295–298 (CDGC). The fe-S binding site B stretch occupies residues 284–298 (CGNCALGDAFRCDGC).

The protein belongs to the anamorsin family. In terms of assembly, monomer. Interacts with TAH18. Interacts with MIA40. The cofactor is [2Fe-2S] cluster. [4Fe-4S] cluster is required as a cofactor.

Its subcellular location is the cytoplasm. The protein localises to the mitochondrion intermembrane space. Component of the cytosolic iron-sulfur (Fe-S) protein assembly (CIA) machinery required for the maturation of extramitochondrial Fe-S proteins. Part of an electron transfer chain functioning in an early step of cytosolic Fe-S biogenesis, facilitating the de novo assembly of a [4Fe-4S] cluster on the scaffold complex CFD1-NBP35. Electrons are transferred to DRE2 from NADPH via the FAD- and FMN-containing protein TAH18. TAH18-DRE2 are also required for the assembly of the diferric tyrosyl radical cofactor of ribonucleotide reductase (RNR), probably by providing electrons for reduction during radical cofactor maturation in the catalytic small subunit RNR2. The chain is Fe-S cluster assembly protein DRE2 from Coccidioides immitis (strain RS) (Valley fever fungus).